An 803-amino-acid polypeptide reads, in one-letter code: Chromatin structure-remodeling complex subunit rsc1 (803 aa).

Residues 9 to 117 (ADDKKLQRVL…EFCIQQLRTF (109 aa)) form the Bromo 1 domain. Over residues 128 to 154 (WPNTDSPSATTSSPISRNPEYSVSPPN) the composition is skewed to polar residues. A disordered region spans residues 128-160 (WPNTDSPSATTSSPISRNPEYSVSPPNGSKFVK). S168 carries the post-translational modification Phosphoserine. A disordered region spans residues 174-206 (EEDSDVKGRSMVGRDGRYKSEDLKRRKLQPSSK). Basic and acidic residues predominate over residues 178 to 197 (DVKGRSMVGRDGRYKSEDLK). In terms of domain architecture, Bromo 2 spans 206-316 (KPLSSLEARA…NYLADVLRLE (111 aa)). Phosphoserine occurs at positions 331 and 334. A BAH domain is found at 351–469 (TLLNVGDWVL…DDTKQFSKIK (119 aa)). Positions 512 to 525 (GLPSPATTDSNTHM) are enriched in polar residues. Residues 512–616 (GLPSPATTDS…RTSTKSTSPI (105 aa)) form a disordered region. Residues 526–539 (LPSQGSLLPPSSIS) show a composition bias toward low complexity. Polar residues-rich tracts occupy residues 540-553 (ETKS…TPLS) and 605-615 (IMRTSTKSTSP).

It belongs to the RSC1 family. As to quaternary structure, component of the RSC complex composed of at least arp9, arp42, rsc1, rsc4, rsc7, rsc9, rsc58, sfh1, snf21, ssr1, ssr2, ssr3 and ssr4. The complex interacts with histone and histone variant components of centromeric chromatin.

Its subcellular location is the nucleus. Its function is as follows. Component of the chromatin structure remodeling complex (RSC), which is involved in transcription regulation and nucleosome positioning. Controls particularly membrane and organelle development genes. The chain is Chromatin structure-remodeling complex subunit rsc1 (rsc1) from Schizosaccharomyces pombe (strain 972 / ATCC 24843) (Fission yeast).